The primary structure comprises 289 residues: uncharacterized protein (289 aa).

Residues 80-96 (PLNESRTSFKNIPQSRN) are compositionally biased toward polar residues. 2 disordered regions span residues 80 to 101 (PLNE…PRDY) and 136 to 157 (PREN…RMRE).

This is an uncharacterized protein from Acanthamoeba polyphaga (Amoeba).